The sequence spans 124 residues: V-type proton ATPase subunit F 1 (124 aa).

Belongs to the V-ATPase F subunit family. In terms of assembly, V-ATPase is a heteromultimeric enzyme made up of two complexes: the ATP-hydrolytic V1 complex and the proton translocation V0 complex. The V1 complex consists of three catalytic AB heterodimers that form a heterohexamer, three peripheral stalks each consisting of EG heterodimers, one central rotor including subunits D and F, and the regulatory subunits C and H. The proton translocation complex V0 consists of the proton transport subunit a, a ring of proteolipid subunits c9c'', rotary subunit d, subunits e and f, and the accessory subunits VhaAC45 and ATP6AP2.

Subunit of the V1 complex of vacuolar(H+)-ATPase (V-ATPase), a multisubunit enzyme composed of a peripheral complex (V1) that hydrolyzes ATP and a membrane integral complex (V0) that translocates protons. V-ATPase is responsible for acidifying and maintaining the pH of intracellular compartments and in some cell types, is targeted to the plasma membrane, where it is responsible for acidifying the extracellular environment. The chain is V-type proton ATPase subunit F 1 (Vha14) from Drosophila pseudoobscura pseudoobscura (Fruit fly).